The sequence spans 448 residues: Multiple inositol polyphosphate phosphatase 1 (448 aa).

Residues 1 to 19 form the signal peptide; sequence MAPRRAACLLPLLVAVASA. The active site involves His-69. Asn-203, Asn-257, Asn-409, and Asn-441 each carry an N-linked (GlcNAc...) asparagine glycan. The short motif at 445-448 is the Prevents secretion from ER element; sequence ADEL.

Belongs to the histidine acid phosphatase family. MINPP1 subfamily. N-glycosylated. As to expression, present in growth plate chondrocytes but not detectable in articular chondrocytes (at protein level). Spatially restricted to chondrocytes in the lower portion of the proliferative zone and the upper portion of the hypertrophic zone in the growth plate of long bones (at protein level). Weakly expressed in kidney, liver, lung, skin and spleen, and not detected in brain, heart and muscle.

It localises to the endoplasmic reticulum lumen. The protein resides in the secreted. Its subcellular location is the cell membrane. It carries out the reaction 1D-myo-inositol hexakisphosphate + H2O = 1D-myo-inositol 1,2,4,5,6-pentakisphosphate + phosphate. The enzyme catalyses 1D-myo-inositol 1,2,4,5,6-pentakisphosphate + H2O = 1D-myo-inositol 1,2,5,6-tetrakisphosphate + phosphate. The catalysed reaction is 1D-myo-inositol 1,2,5,6-tetrakisphosphate + H2O = 1D-myo-inositol 1,2,6-trisphosphate + phosphate. It catalyses the reaction 1D-myo-inositol 1,2,6-trisphosphate + H2O = 1D-myo-inositol 1,2-bisphosphate + phosphate. It carries out the reaction 1D-myo-inositol 1,2-bisphosphate + H2O = 1D-myo-inositol 2-phosphate + phosphate. The enzyme catalyses 1D-myo-inositol hexakisphosphate + H2O = 1D-myo-inositol 1,2,3,5,6-pentakisphosphate + phosphate. The catalysed reaction is 1D-myo-inositol 1,2,3,5,6-pentakisphosphate + H2O = 1D-myo-inositol 1,2,3,6-tetrakisphosphate + phosphate. It catalyses the reaction 1D-myo-inositol 1,2,3,6-tetrakisphosphate + H2O = 1D-myo-inositol 1,2,3-trisphosphate + phosphate. It carries out the reaction 1D-myo-inositol 1,2,3-trisphosphate + H2O = 1D-myo-inositol 2,3-bisphosphate + phosphate. The enzyme catalyses 1D-myo-inositol 2,3-bisphosphate + H2O = 1D-myo-inositol 2-phosphate + phosphate. The catalysed reaction is 1D-myo-inositol 1,3,4,5,6-pentakisphosphate + H2O = 1D-myo-inositol 1,4,5,6-tetrakisphosphate + phosphate. It catalyses the reaction 1D-myo-inositol 1,4,5,6-tetrakisphosphate + H2O = 1D-myo-inositol 1,4,5-trisphosphate + phosphate. It carries out the reaction (2R)-2,3-bisphosphoglycerate + H2O = (2R)-2-phosphoglycerate + phosphate. Multiple inositol polyphosphate phosphatase that hydrolyzes 1D-myo-inositol 1,3,4,5,6-pentakisphosphate (InsP5[2OH]) and 1D-myo-inositol hexakisphosphate (InsP6) to a range of less phosphorylated inositol phosphates. This regulates the availability of these various small molecule second messengers and metal chelators which control many aspects of cell physiology. Has a weak in vitro activity towards 1D-myo-inositol 1,4,5-trisphosphate which is unlikely to be physiologically relevant. By regulating intracellular inositol polyphosphates pools, which act as metal chelators, it may control the availability of intracellular calcium and iron, which are important for proper neuronal development and homeostasis. May have a dual substrate specificity, and function as a 2,3-bisphosphoglycerate 3-phosphatase hydrolyzing 2,3-bisphosphoglycerate to 2-phosphoglycerate. 2,3-bisphosphoglycerate (BPG) is formed as part of the Rapoport-Luebering glycolytic bypass and is a regulator of systemic oxygen homeostasis as the major allosteric effector of hemoglobin. This is Multiple inositol polyphosphate phosphatase 1 (MINPP1) from Gallus gallus (Chicken).